We begin with the raw amino-acid sequence, 134 residues long: Small ribosomal subunit protein uS8c (134 aa).

The protein belongs to the universal ribosomal protein uS8 family. Part of the 30S ribosomal subunit.

Its subcellular location is the plastid. It localises to the chloroplast. Its function is as follows. One of the primary rRNA binding proteins, it binds directly to 16S rRNA central domain where it helps coordinate assembly of the platform of the 30S subunit. In Vitis vinifera (Grape), this protein is Small ribosomal subunit protein uS8c (rps8).